Consider the following 1385-residue polypeptide: DNA-directed RNA polymerase subunit beta (1385 aa).

It belongs to the RNA polymerase beta chain family. The RNAP catalytic core consists of 2 alpha, 1 beta, 1 beta' and 1 omega subunit. When a sigma factor is associated with the core the holoenzyme is formed, which can initiate transcription.

The enzyme catalyses RNA(n) + a ribonucleoside 5'-triphosphate = RNA(n+1) + diphosphate. Its function is as follows. DNA-dependent RNA polymerase catalyzes the transcription of DNA into RNA using the four ribonucleoside triphosphates as substrates. This is DNA-directed RNA polymerase subunit beta from Sulfurovum sp. (strain NBC37-1).